A 146-amino-acid polypeptide reads, in one-letter code: Protein phosphatase 1 regulatory subunit 14D (146 aa).

Residues 1-16 (MLSSSAASCTSPNPDT) show a composition bias toward polar residues. The disordered stretch occupies residues 1-57 (MLSSSAASCTSPNPDTDNPDKKVRWSSEKRRRASSTDSESKTHLDISKLPRSRRPSR). Basic and acidic residues-rich tracts occupy residues 18 to 28 (NPDKKVRWSSE) and 38 to 48 (SESKTHLDISK). The tract at residues 21-25 (KKVRW) is interaction with protein phosphatase 1.

It belongs to the PP1 inhibitor family. Post-translationally, phosphorylated on several residues.

It is found in the cytoplasm. Functionally, inhibitor of PPP1CA. Has inhibitory activity only when phosphorylated, creating a molecular switch for regulating the phosphorylation status of PPP1CA substrates and smooth muscle contraction. The sequence is that of Protein phosphatase 1 regulatory subunit 14D (Ppp1r14d) from Rattus norvegicus (Rat).